A 295-amino-acid chain; its full sequence is Ribosomal RNA small subunit methyltransferase A (295 aa).

Positions 29, 31, 56, 77, 102, and 128 each coordinate S-adenosyl-L-methionine.

This sequence belongs to the class I-like SAM-binding methyltransferase superfamily. rRNA adenine N(6)-methyltransferase family. RsmA subfamily.

It is found in the cytoplasm. The catalysed reaction is adenosine(1518)/adenosine(1519) in 16S rRNA + 4 S-adenosyl-L-methionine = N(6)-dimethyladenosine(1518)/N(6)-dimethyladenosine(1519) in 16S rRNA + 4 S-adenosyl-L-homocysteine + 4 H(+). Its function is as follows. Specifically dimethylates two adjacent adenosines (A1518 and A1519) in the loop of a conserved hairpin near the 3'-end of 16S rRNA in the 30S particle. May play a critical role in biogenesis of 30S subunits. In Listeria welshimeri serovar 6b (strain ATCC 35897 / DSM 20650 / CCUG 15529 / CIP 8149 / NCTC 11857 / SLCC 5334 / V8), this protein is Ribosomal RNA small subunit methyltransferase A.